The following is a 218-amino-acid chain: Small ribosomal subunit protein uS3 (218 aa).

Positions 38–106 constitute a KH type-2 domain; it reads IRKFIATKLA…RVHINIVEIK (69 aa).

The protein belongs to the universal ribosomal protein uS3 family. Part of the 30S ribosomal subunit. Forms a tight complex with proteins S10 and S14.

Binds the lower part of the 30S subunit head. Binds mRNA in the 70S ribosome, positioning it for translation. The protein is Small ribosomal subunit protein uS3 of Enterococcus faecalis (strain ATCC 700802 / V583).